The following is a 504-amino-acid chain: ATP synthase subunit alpha (504 aa).

169–176 (GDRQTGKT) serves as a coordination point for ATP.

Belongs to the ATPase alpha/beta chains family. F-type ATPases have 2 components, CF(1) - the catalytic core - and CF(0) - the membrane proton channel. CF(1) has five subunits: alpha(3), beta(3), gamma(1), delta(1), epsilon(1). CF(0) has three main subunits: a(1), b(2) and c(9-12). The alpha and beta chains form an alternating ring which encloses part of the gamma chain. CF(1) is attached to CF(0) by a central stalk formed by the gamma and epsilon chains, while a peripheral stalk is formed by the delta and b chains.

Its subcellular location is the cell membrane. It carries out the reaction ATP + H2O + 4 H(+)(in) = ADP + phosphate + 5 H(+)(out). Produces ATP from ADP in the presence of a proton gradient across the membrane. The alpha chain is a regulatory subunit. The polypeptide is ATP synthase subunit alpha (Clostridium botulinum (strain Alaska E43 / Type E3)).